The sequence spans 318 residues: Phosphoenolpyruvate transferase (318 aa).

Residue aspartate 50 participates in 7,8-didemethyl-8-hydroxy-5-deazariboflavin binding.

The protein belongs to the CofD family. As to quaternary structure, homodimer. The cofactor is Mg(2+).

It catalyses the reaction enolpyruvoyl-2-diphospho-5'-guanosine + 7,8-didemethyl-8-hydroxy-5-deazariboflavin = dehydro coenzyme F420-0 + GMP + H(+). The protein operates within cofactor biosynthesis; coenzyme F420 biosynthesis. Functionally, catalyzes the transfer of the phosphoenolpyruvate moiety from enoylpyruvoyl-2-diphospho-5'-guanosine (EPPG) to 7,8-didemethyl-8-hydroxy-5-deazariboflavin (FO) with the formation of dehydro coenzyme F420-0 and GMP. This is Phosphoenolpyruvate transferase from Streptomyces griseus subsp. griseus (strain JCM 4626 / CBS 651.72 / NBRC 13350 / KCC S-0626 / ISP 5235).